We begin with the raw amino-acid sequence, 482 residues long: Aspartyl/glutamyl-tRNA(Asn/Gln) amidotransferase subunit B (482 aa).

It belongs to the GatB/GatE family. GatB subfamily. Heterotrimer of A, B and C subunits.

The enzyme catalyses L-glutamyl-tRNA(Gln) + L-glutamine + ATP + H2O = L-glutaminyl-tRNA(Gln) + L-glutamate + ADP + phosphate + H(+). The catalysed reaction is L-aspartyl-tRNA(Asn) + L-glutamine + ATP + H2O = L-asparaginyl-tRNA(Asn) + L-glutamate + ADP + phosphate + 2 H(+). Allows the formation of correctly charged Asn-tRNA(Asn) or Gln-tRNA(Gln) through the transamidation of misacylated Asp-tRNA(Asn) or Glu-tRNA(Gln) in organisms which lack either or both of asparaginyl-tRNA or glutaminyl-tRNA synthetases. The reaction takes place in the presence of glutamine and ATP through an activated phospho-Asp-tRNA(Asn) or phospho-Glu-tRNA(Gln). In Thermotoga petrophila (strain ATCC BAA-488 / DSM 13995 / JCM 10881 / RKU-1), this protein is Aspartyl/glutamyl-tRNA(Asn/Gln) amidotransferase subunit B.